The chain runs to 246 residues: Allergin-1 (246 aa).

The N-terminal stretch at 1 to 33 (MGDGDSPMCLSAVSFKGIRCWLDKLLLWALTIS) is a signal peptide. Topologically, residues 34 to 150 (ITLQNAAVDC…DESCPSCRLS (117 aa)) are extracellular. The region spanning 52 to 131 (PSPNLNSSMN…VNVSNLMKYS (80 aa)) is the Ig-like C2-type domain. A glycan (N-linked (GlcNAc...) asparagine) is linked at Asn68. Cys73 and Cys120 form a disulfide bridge. The helical transmembrane segment at 151 to 171 (LLLPGLLLGILVIVLVLAYLI) threads the bilayer. Residues 172–246 (HLKYKKGKKT…ADYIYSELTH (75 aa)) are Cytoplasmic-facing. 2 short sequence motifs (ITIM motif) span residues 214 to 219 (IHYATP) and 239 to 244 (YIYSEL). Phosphotyrosine is present on residues Tyr216 and Tyr241.

In terms of assembly, monomer. Interacts (tyrosine-phosphorylated) with PTPN6, PTPN11 and INPP5D. In terms of processing, N-glycosylated. Expressed in myeloid cells (dendritic cells, macrophages and neutrophils but not in T-cells, B-cells or natural killer cells) and mast cells (at protein level).

It localises to the cell membrane. The protein localises to the secreted. Its function is as follows. Immunoglobulin-like receptor which plays an inhibitory role in degranulation of mast cells. Negatively regulates IgE-mediated mast cell activation and suppresses the type I immediate hypersensitivity reaction. This chain is Allergin-1 (Milr1), found in Mus musculus (Mouse).